An 828-amino-acid chain; its full sequence is Periplasmic nitrate reductase (828 aa).

Positions 1 to 31 form a signal peptide, tat-type signal; the sequence is MKLSRRHFMKANAVAAAAAVAGITIPIAVRA. Residues 39-95 enclose the 4Fe-4S Mo/W bis-MGD-type domain; that stretch reads IHWDKAPCRFCGVGCGVLVGTQNGRIVASQGDPEAPVNRGLNCIKGYFLPKIMYGQD. 4 residues coordinate [4Fe-4S] cluster: Cys-46, Cys-49, Cys-53, and Cys-81. Mo-bis(molybdopterin guanine dinucleotide)-binding positions include Lys-83, Gln-150, Asn-175, Cys-179, 212–219, 243–247, 262–264, Met-372, Gln-376, Asn-482, 508–509, Lys-531, Asp-558, and 718–727; these read WGSNMAEM, STYQH, QTD, SD, and TGRVLEHWHT. Position 794 (Phe-794) interacts with substrate. Mo-bis(molybdopterin guanine dinucleotide) is bound by residues Asn-802 and Lys-819.

This sequence belongs to the prokaryotic molybdopterin-containing oxidoreductase family. NasA/NapA/NarB subfamily. As to quaternary structure, component of the periplasmic nitrate reductase NapAB complex composed of NapA and NapB. The cofactor is [4Fe-4S] cluster. Mo-bis(molybdopterin guanine dinucleotide) is required as a cofactor. In terms of processing, predicted to be exported by the Tat system. The position of the signal peptide cleavage has not been experimentally proven.

Its subcellular location is the periplasm. It carries out the reaction 2 Fe(II)-[cytochrome] + nitrate + 2 H(+) = 2 Fe(III)-[cytochrome] + nitrite + H2O. Its function is as follows. Catalytic subunit of the periplasmic nitrate reductase complex NapAB. Receives electrons from NapB and catalyzes the reduction of nitrate to nitrite. The chain is Periplasmic nitrate reductase from Pectobacterium atrosepticum (strain SCRI 1043 / ATCC BAA-672) (Erwinia carotovora subsp. atroseptica).